A 146-amino-acid chain; its full sequence is UPF0735 ACT domain-containing protein Cphy_3604 (146 aa).

The ACT domain maps to 70–145 (TFMLQMDDIP…GIHYLKILGR (76 aa)).

It belongs to the UPF0735 family.

The polypeptide is UPF0735 ACT domain-containing protein Cphy_3604 (Lachnoclostridium phytofermentans (strain ATCC 700394 / DSM 18823 / ISDg) (Clostridium phytofermentans)).